A 117-amino-acid polypeptide reads, in one-letter code: B-box domain protein 30 (117 aa).

The B box-type; atypical zinc-finger motif lies at 27–73 (KAPVSCELCGENATVYCEADAAFLCRKCDRWVHSANFLARRHLRRVI). Cysteine 32, cysteine 35, cysteine 54, and histidine 59 together coordinate Zn(2+). Residues 113–117 (PFVFL) carry the PFVFL motif.

In terms of assembly, interacts with CO (via B-box) and with TPL (via PFVFL motif). Highly expressed in shoot apical meristems and in vascular tissues of leaves. Also detected in petioles.

The protein localises to the nucleus. In terms of biological role, developmental regulator acting by forming heterodimeric complexes, that sequester CO and CO-like (COL) proteins into non-functional complexes. Engages CO and the transcriptional repressor TPL in a tripartite complex. Involved in the CO-mediated long-day flowering-promotion pathway. The polypeptide is B-box domain protein 30 (Arabidopsis thaliana (Mouse-ear cress)).